A 341-amino-acid chain; its full sequence is Glyceraldehyde-3-phosphate dehydrogenase 2 (341 aa).

NAD(+) is bound by residues 12–13, arginine 78, and threonine 120; that span reads RI. D-glyceraldehyde 3-phosphate-binding positions include 152–154 and threonine 183; that span reads SCT. Cysteine 153 serves as the catalytic Nucleophile. Asparagine 184 contacts NAD(+). D-glyceraldehyde 3-phosphate contacts are provided by residues arginine 198, 211–212, and arginine 234; that span reads TG. Residue asparagine 313 participates in NAD(+) binding.

The protein belongs to the glyceraldehyde-3-phosphate dehydrogenase family. As to quaternary structure, homotetramer.

Its subcellular location is the cytoplasm. The enzyme catalyses D-glyceraldehyde 3-phosphate + phosphate + NAD(+) = (2R)-3-phospho-glyceroyl phosphate + NADH + H(+). The protein operates within carbohydrate degradation; glycolysis; pyruvate from D-glyceraldehyde 3-phosphate: step 1/5. Functionally, catalyzes the oxidative phosphorylation of glyceraldehyde 3-phosphate (G3P) to 1,3-bisphosphoglycerate (BPG) using the cofactor NAD. The first reaction step involves the formation of a hemiacetal intermediate between G3P and a cysteine residue, and this hemiacetal intermediate is then oxidized to a thioester, with concomitant reduction of NAD to NADH. The reduced NADH is then exchanged with the second NAD, and the thioester is attacked by a nucleophilic inorganic phosphate to produce BPG. The polypeptide is Glyceraldehyde-3-phosphate dehydrogenase 2 (gapA2) (Staphylococcus aureus (strain MRSA252)).